We begin with the raw amino-acid sequence, 376 residues long: N,N'-diacetylbacillosaminyl-diphospho-undecaprenol alpha-1,3-N-acetylgalactosaminyltransferase (376 aa).

It belongs to the glycosyltransferase group 1 family.

The catalysed reaction is N,N'-diacetyl-alpha-D-bacillosaminyl-tri-trans,hepta-cis-undecaprenyl diphosphate + UDP-N-acetyl-alpha-D-galactosamine = N-acetyl-alpha-D-galactosaminyl-(1-&gt;3)-N,N'-diacetyl-alpha-D-bacillosaminyl-tri-trans,hepta-cis-undecaprenyl diphosphate + UDP + H(+). It participates in protein modification; protein glycosylation. In terms of biological role, adds the first GalNAc residue on to the isoprenoid-linked bacillosamine (2,4-diacetamido-2,4,6-trideoxyglucose) carrier in the N-linked protein glycosylation pathway. Acts first on the undecaprenylpyrophosphate-linked bacillosamine (Und-PP-Bac) substrate to yield the disaccharide. The protein is N,N'-diacetylbacillosaminyl-diphospho-undecaprenol alpha-1,3-N-acetylgalactosaminyltransferase (pglA) of Campylobacter jejuni subsp. jejuni serotype O:2 (strain ATCC 700819 / NCTC 11168).